The chain runs to 198 residues: Peptidyl-tRNA hydrolase (198 aa).

Tyrosine 14 contributes to the tRNA binding site. Histidine 19 acts as the Proton acceptor in catalysis. Positions 64, 66, and 113 each coordinate tRNA.

This sequence belongs to the PTH family. In terms of assembly, monomer.

Its subcellular location is the cytoplasm. It carries out the reaction an N-acyl-L-alpha-aminoacyl-tRNA + H2O = an N-acyl-L-amino acid + a tRNA + H(+). Functionally, hydrolyzes ribosome-free peptidyl-tRNAs (with 1 or more amino acids incorporated), which drop off the ribosome during protein synthesis, or as a result of ribosome stalling. Catalyzes the release of premature peptidyl moieties from peptidyl-tRNA molecules trapped in stalled 50S ribosomal subunits, and thus maintains levels of free tRNAs and 50S ribosomes. This is Peptidyl-tRNA hydrolase from Acidobacterium capsulatum (strain ATCC 51196 / DSM 11244 / BCRC 80197 / JCM 7670 / NBRC 15755 / NCIMB 13165 / 161).